A 619-amino-acid chain; its full sequence is Chaperone protein DnaK (619 aa).

A Phosphothreonine; by autocatalysis modification is found at Thr-175. The interval 578–619 (NGGAQGEGFDPNNMGGANAGTGAANSNDDNVVDADFEVQDDK) is disordered. The span at 589-606 (NNMGGANAGTGAANSNDD) shows a compositional bias: low complexity. Residues 607-619 (NVVDADFEVQDDK) show a composition bias toward acidic residues.

The protein belongs to the heat shock protein 70 family.

Acts as a chaperone. This Clostridium perfringens (strain SM101 / Type A) protein is Chaperone protein DnaK.